The following is a 175-amino-acid chain: Shikimate kinase (175 aa).

ATP is bound at residue 14 to 19 (GAGKST). Mg(2+) is bound at residue Ser18. Residues Asp36, Arg60, and Gly82 each contribute to the substrate site. Arg120 provides a ligand contact to ATP. Arg140 serves as a coordination point for substrate. Gln157 is an ATP binding site.

This sequence belongs to the shikimate kinase family. Monomer. It depends on Mg(2+) as a cofactor.

It localises to the cytoplasm. The catalysed reaction is shikimate + ATP = 3-phosphoshikimate + ADP + H(+). It functions in the pathway metabolic intermediate biosynthesis; chorismate biosynthesis; chorismate from D-erythrose 4-phosphate and phosphoenolpyruvate: step 5/7. Functionally, catalyzes the specific phosphorylation of the 3-hydroxyl group of shikimic acid using ATP as a cosubstrate. This is Shikimate kinase from Actinobacillus succinogenes (strain ATCC 55618 / DSM 22257 / CCUG 43843 / 130Z).